The primary structure comprises 484 residues: Poly(A) RNA polymerase GLD2 (484 aa).

S62 and S69 each carry phosphoserine. The short motif at 76–92 is the Nuclear localization signal element; the sequence is KRISDEKAFPLDGKRQR. Phosphoserine is present on S95. Mg(2+) contacts are provided by D213 and D215. In terms of domain architecture, PAP-associated spans 386 to 440; the sequence is SLGDLLLGFLKYYATEFDWNTQMISVREAKAIPRPDDMEWRNKYICVEEPFDGTN.

This sequence belongs to the DNA polymerase type-B-like family. GLD2 subfamily. In terms of assembly, interacts with CPEB1, CPEB2, CPSF1 and PABPC1. Interacts with QKI isoform QKI7; promoting recruitment to miRNA miR-122 and miR-122 stabilization. Requires Mg(2+) as cofactor. Mn(2+) serves as cofactor. Ubiquitous. In brain, it is highly expressed in the cerebral cortex, cerebellum, hippocampus and olfactory bulb.

The protein resides in the cytoplasm. It localises to the nucleus. It carries out the reaction RNA(n) + ATP = RNA(n)-3'-adenine ribonucleotide + diphosphate. Cytoplasmic poly(A) RNA polymerase that adds successive AMP monomers to the 3'-end of specific RNAs, forming a poly(A) tail. In contrast to the canonical nuclear poly(A) RNA polymerase, it only adds poly(A) to selected cytoplasmic mRNAs. Does not play a role in replication-dependent histone mRNA degradation. Adds a single nucleotide to the 3' end of specific miRNAs, monoadenylation stabilizes and prolongs the activity of some but not all miRNAs. The polypeptide is Poly(A) RNA polymerase GLD2 (Tent2) (Mus musculus (Mouse)).